The chain runs to 456 residues: Major facilitator superfamily domain-containing protein 10 (456 aa).

The next 11 membrane-spanning stretches (helical) occupy residues 25 to 45 (VVAVVFLGLLLDLLAFTLLLP), 87 to 107 (VLFGGLIGSVFSLLQFLSAPL), 125 to 145 (LAGVATSYAVWAASKSFAAFL), 149 to 169 (VIGGISKGNVSLCTAIVADLG), 179 to 199 (AVIGVAFSLGFTLGPTLGAFL), 204 to 224 (VPWLALLFAVSDLLFIWCFLP), 278 to 298 (LVYFLYLFLFSGLEFTLSFLV), 311 to 328 (KMFFFIGLTMATIQGAYA), 343 to 363 (AILLLIPASLFVGWGHTLPIL), 365 to 385 (LGLLLYSWAAAVVVPCLSSVV), and 422 to 442 (LAGARVCYTVCAALFLLPFSI).

The protein belongs to the major facilitator superfamily.

It localises to the nucleus inner membrane. It is found in the cell membrane. In terms of biological role, probable organic anion transporter which may serve as a transporter for some non-steroidal anti-inflammatory drugs (NSAIDs) as well as other organic anions across the luminal membranes of renal proximal tubules at the final excretion step into the urine. In Bos taurus (Bovine), this protein is Major facilitator superfamily domain-containing protein 10 (MFSD10).